A 225-amino-acid polypeptide reads, in one-letter code: MKKNVQIKGTKDGISIFLSDKASISELQQELTQLLADQKQNPYSGEKLEVQVQIGNRLFSEEEEREISTIIHENSQMKISAFYSNVMSKDEAKKWKENDQIFSMATIIRSGQVVQVPGDFLLIGDVNPGGQIRSNGNVFVLGNIKGIIHAGFEGNGNAIVAGKFLYPSQVRIADKVYGFDSEDYKEVTETDLFSAFVNDAGEIVIDGIHKIRKIRPEISNFQGGR.

Belongs to the MinC family. As to quaternary structure, interacts with MinD and FtsZ.

Its function is as follows. Cell division inhibitor that blocks the formation of polar Z ring septums. Rapidly oscillates between the poles of the cell to destabilize FtsZ filaments that have formed before they mature into polar Z rings. Prevents FtsZ polymerization. This chain is Probable septum site-determining protein MinC, found in Listeria monocytogenes serotype 4b (strain CLIP80459).